Here is a 166-residue protein sequence, read N- to C-terminus: Glycine cleavage system H protein 3, mitochondrial (166 aa).

The transit peptide at 1 to 35 directs the protein to the mitochondrion; that stretch reads MALRMWASSTANALKLSSSASKSHLLPAFSISRCF. The Lipoyl-binding domain occupies 57-139; the sequence is VATIGITDHA…YEDGWMIKVK (83 aa). K98 carries the N6-lipoyllysine modification. S141 carries the post-translational modification Phosphoserine.

Belongs to the GcvH family. The glycine cleavage system is composed of four proteins: P, T, L and H. (R)-lipoate serves as cofactor. In terms of processing, S-nitrosylated and/or glutathionylated at unknown positions in response to nitric oxide.

The protein localises to the mitochondrion. Its activity is regulated as follows. Inhibited by harpin, S-nitrosoglutathione (GSNO), nitric oxide, N-ethylmaleimide and 5,5'-dithiobis-(2-nitrobenzoic acid). The glycine decarboxylase (GDC) or glycine cleavage system catalyzes the degradation of glycine. The H protein shuttles the methylamine group of glycine from the P protein to the T protein. The chain is Glycine cleavage system H protein 3, mitochondrial (GDH3) from Arabidopsis thaliana (Mouse-ear cress).